We begin with the raw amino-acid sequence, 573 residues long: Protein translocase subunit SecD (573 aa).

A helical transmembrane segment spans residues 13 to 33 (YLSVFLVMLIGIYLLVFFTGD). The interval 127 to 200 (AQPAAEEPQP…PPAEAPATDP (74 aa)) is disordered. Pro residues-rich tracts occupy residues 135-154 (QPAPSAEPQPPGQPAAPPPA) and 161-194 (SPQPGAQPRPYPQDPAPSPNPTSPASPPPAPPAE). A run of 5 helical transmembrane segments spans residues 385–405 (AGMIAGAIGLLLVLVYSLLYY), 410–430 (LLTALSLVASGSMVFAILVLL), 441–461 (AGIAGLIIGIGTTADSFVVFF), 489–509 (IVSGNAVTFLAAAVLYFLAIG), and 514–534 (FAFTLGLTTILDLVVVFLVTW).

Belongs to the SecD/SecF family. SecD subfamily. In terms of assembly, forms a complex with SecF. Part of the essential Sec protein translocation apparatus which comprises SecA, SecYEG and auxiliary proteins SecDF. Other proteins may also be involved.

It is found in the cell membrane. Functionally, part of the Sec protein translocase complex. Interacts with the SecYEG preprotein conducting channel. SecDF uses the proton motive force (PMF) to complete protein translocation after the ATP-dependent function of SecA. This Mycobacterium tuberculosis (strain CDC 1551 / Oshkosh) protein is Protein translocase subunit SecD.